The sequence spans 275 residues: Large ribosomal subunit protein uL2 (275 aa).

Residues 221–275 are disordered; sequence RGTAMNPIDHPHGGGEGKNFGKHPVSPWGVQSKGKKTRKNKRTEKYILYNRKYKK. Over residues 253-262 the composition is skewed to basic residues; it reads KGKKTRKNKR.

Belongs to the universal ribosomal protein uL2 family. As to quaternary structure, part of the 50S ribosomal subunit. Forms a bridge to the 30S subunit in the 70S ribosome.

Its function is as follows. One of the primary rRNA binding proteins. Required for association of the 30S and 50S subunits to form the 70S ribosome, for tRNA binding and peptide bond formation. It has been suggested to have peptidyltransferase activity; this is somewhat controversial. Makes several contacts with the 16S rRNA in the 70S ribosome. This Wigglesworthia glossinidia brevipalpis protein is Large ribosomal subunit protein uL2.